The following is a 172-amino-acid chain: Large ribosomal subunit protein uL10 (172 aa).

This sequence belongs to the universal ribosomal protein uL10 family. Part of the ribosomal stalk of the 50S ribosomal subunit. The N-terminus interacts with L11 and the large rRNA to form the base of the stalk. The C-terminus forms an elongated spine to which L12 dimers bind in a sequential fashion forming a multimeric L10(L12)X complex.

In terms of biological role, forms part of the ribosomal stalk, playing a central role in the interaction of the ribosome with GTP-bound translation factors. The protein is Large ribosomal subunit protein uL10 of Brucella abortus (strain S19).